The sequence spans 272 residues: L-aminoadipate-semialdehyde dehydrogenase-phosphopantetheinyl transferase (272 aa).

Belongs to the P-Pant transferase superfamily. AcpS family.

The catalysed reaction is apo-[ACP] + CoA = holo-[ACP] + adenosine 3',5'-bisphosphate + H(+). In terms of biological role, catalyzes the transfer of a 4'-phosphopantetheine moiety from coenzyme A to a serine residue of acceptor proteins, such as alpha-aminoadipate reductase. Necessary for alpha-aminoadipate reductase activity. The sequence is that of L-aminoadipate-semialdehyde dehydrogenase-phosphopantetheinyl transferase from Saccharomyces cerevisiae (strain ATCC 204508 / S288c) (Baker's yeast).